The primary structure comprises 622 residues: ATP-dependent lipid A-core flippase (622 aa).

The next 5 helical transmembrane spans lie at 32 to 52 (IVAA…LAAF), 91 to 111 (VWGT…LVVI), 192 to 212 (IVLL…FPLL), 286 to 306 (SPFS…IALW), and 312 to 332 (YTTI…YAPI). An ABC transmembrane type-1 domain is found at 33-344 (VAALIAIFGV…LANISIPMQT (312 aa)). The 234-residue stretch at 378–611 (FRNVDVEYRS…NGYYTMLRNI (234 aa)) folds into the ABC transporter domain. Position 410 to 417 (410 to 417 (GRSGSGKS)) interacts with ATP.

The protein belongs to the ABC transporter superfamily. Lipid exporter (TC 3.A.1.106) family. In terms of assembly, homodimer.

Its subcellular location is the cell inner membrane. The enzyme catalyses ATP + H2O + lipid A-core oligosaccharideSide 1 = ADP + phosphate + lipid A-core oligosaccharideSide 2.. Functionally, involved in lipopolysaccharide (LPS) biosynthesis. Translocates lipid A-core from the inner to the outer leaflet of the inner membrane. Transmembrane domains (TMD) form a pore in the inner membrane and the ATP-binding domain (NBD) is responsible for energy generation. This is ATP-dependent lipid A-core flippase from Neisseria gonorrhoeae (strain ATCC 700825 / FA 1090).